The primary structure comprises 187 residues: Accessory gene regulator protein B (187 aa).

5 consecutive transmembrane segments (helical) span residues 49–69 (ISIF…YMLI), 82–102 (ILCY…LINI), 106–126 (FTYL…YAPA), 144–164 (LSII…PFYA), and 166–186 (FMLL…FPKE).

It belongs to the AgrB family.

The protein localises to the cell membrane. In terms of biological role, essential for the production of a quorum sensing system signal molecule, the autoinducing peptide (AIP). This quorum sensing system is responsible for the regulation of the expression of virulence factor genes. Involved in the proteolytic processing of AgrD, the precursor of AIP. The protein is Accessory gene regulator protein B of Staphylococcus aureus (strain Mu50 / ATCC 700699).